Consider the following 956-residue polypeptide: Endogenous retrovirus group K member 6 Pol protein (956 aa).

The region spanning 57 to 245 (LEKGHIEPSF…TPFHYLGMQI (189 aa)) is the Reverse transcriptase domain. Residues 161–164 (LPQG) carry the LPQG motif. The YXDD motif lies at 195–198 (CIDD). One can recognise an RNase H type-1 domain in the interval 460 to 590 (LENALTVFTD…ADLLVSSALI (131 aa)). Mg(2+) contacts are provided by aspartate 469, glutamate 497, aspartate 517, and aspartate 582. The segment at 587 to 628 (SALIKAQELHALTHVNAAGLKNKFDVTWKQAKDIVQHCTQCQ) adopts an Integrase-type zinc-finger fold. Zn(2+) contacts are provided by histidine 596, histidine 600, cysteine 624, and cysteine 627. The 162-residue stretch at 642–803 (RGLCPNALWQ…TSAEQHLTGK (162 aa)) folds into the Integrase catalytic domain. A DNA-binding region (integrase-type) is located at residues 811 to 859 (KLIWWKDNKNKTWEIGKVITWGRGFACVSPGENQLPVWIPTRHLKFYNE). A disordered region spans residues 865–890 (KKSTSAETETSQSSTVDSQDEQNGDV). Residues 869-879 (SAETETSQSST) are compositionally biased toward low complexity.

The protein belongs to the beta type-B retroviral polymerase family. HERV class-II K(HML-2) pol subfamily. In terms of processing, cleavage sites that yield the mature proteins remain to be determined.

It carries out the reaction DNA(n) + a 2'-deoxyribonucleoside 5'-triphosphate = DNA(n+1) + diphosphate. It catalyses the reaction Endonucleolytic cleavage to 5'-phosphomonoester.. In terms of biological role, early post-infection, the reverse transcriptase converts the viral RNA genome into double-stranded viral DNA. The RNase H domain of the reverse transcriptase performs two functions. It degrades the RNA template and specifically removes the RNA primer from the RNA/DNA hybrid. Following nuclear import, the integrase catalyzes the insertion of the linear, double-stranded viral DNA into the host cell chromosome. Endogenous Pol proteins may have kept, lost or modified their original function during evolution. The chain is Endogenous retrovirus group K member 6 Pol protein (ERVK-6) from Homo sapiens (Human).